The primary structure comprises 653 residues: DNA polymerase (653 aa).

This sequence belongs to the DNA polymerase type-B family.

It carries out the reaction DNA(n) + a 2'-deoxyribonucleoside 5'-triphosphate = DNA(n+1) + diphosphate. Replicates viral genomic DNA. The sequence is that of DNA polymerase from Acidianus convivator (ABV).